The chain runs to 363 residues: 3-dehydroquinate synthase (363 aa).

NAD(+) is bound by residues 72–77 (SGEQSK), 106–110 (GVIGD), 130–131 (TT), Lys142, and Lys151. Positions 184, 246, and 263 each coordinate Zn(2+).

The protein belongs to the sugar phosphate cyclases superfamily. Dehydroquinate synthase family. Co(2+) serves as cofactor. The cofactor is Zn(2+). NAD(+) is required as a cofactor.

Its subcellular location is the cytoplasm. The catalysed reaction is 7-phospho-2-dehydro-3-deoxy-D-arabino-heptonate = 3-dehydroquinate + phosphate. The protein operates within metabolic intermediate biosynthesis; chorismate biosynthesis; chorismate from D-erythrose 4-phosphate and phosphoenolpyruvate: step 2/7. Its function is as follows. Catalyzes the conversion of 3-deoxy-D-arabino-heptulosonate 7-phosphate (DAHP) to dehydroquinate (DHQ). This chain is 3-dehydroquinate synthase, found in Bacillus pumilus (strain SAFR-032).